A 419-amino-acid polypeptide reads, in one-letter code: MLNHFPGHCSNNIFCFPPIESETKSGKKASWIICVQVVQHNTIIPITDEMFSTDVKDAVAEIFTKFFVEEGTVRISKMTRVTEGKNLGKKNATTVVHQAFKDALSKYNRHARQKRGAHTNTGMIPPMLVKYFNIIPKTFFEEETDPIVQRKRNGVRAVACQQGDGSILLYSRTEKEFLGLDNIKKELKQLYLFIDVRVYLDGELYLHRKPLQWIAGQANAKTDSSELHFYVFDCFWSDQLQMPSNKRQQLLTNIFKQKEDLTFIHQVENFSVKNEDEALRLKAQFIKEGYEGAIVRNANGPYEPGYNNYHSAHLAKLKPLLDAEFILVDYTQGKKGKDLGAILWVCELPNKKRFVVTPKHLTYADRYALFQKLTPALFKKHLYGKELTVEYAELSPKTGIPLQARAVGFREPINVLEII.

The tract at residues 1 to 120 (MLNHFPGHCS…ARQKRGAHTN (120 aa)) is NTD. Residues 121–317 (TGMIPPMLVK…NYHSAHLAKL (197 aa)) are AD domain. The N6-AMP-lysine intermediate role is filled by K151. The interval 318–419 (KPLLDAEFIL…REPINVLEII (102 aa)) is OB domain.

It belongs to the ATP-dependent DNA ligase family.

It localises to the virion. The catalysed reaction is ATP + (deoxyribonucleotide)n-3'-hydroxyl + 5'-phospho-(deoxyribonucleotide)m = (deoxyribonucleotide)n+m + AMP + diphosphate.. Functionally, very low-fidelity DNA ligase that seals nicks in double-stranded DNA during DNA repair. Together with the viral repair DNA polymerase X, fills the single nucleotide gaps generated by the AP endonuclease. It is not essential for viral replication and recombination. Displays a very low adenylation activity towards DNA with 3'-dideoxy- or 3'-amino-terminated nicks compared to regular nick DNA. This is DNA ligase from Ornithodoros (relapsing fever ticks).